The following is a 319-amino-acid chain: MARASKKTARGRAAPKLAKVGRGELVTLIDYVRYSVSRFNEAKLAFAHGTTDPVAEAAFLVCEALHLHPDQFEAFAHARVTAAEGKTLLDLIHQRVTTRKPAAYLVNKIYMRGLPFYVDERVIVPRSYIGELLDSHFGGDGEAGSLIDHPTAVERVLDLCTGSGCLAILAAYHFPNATVDAVDISKGALEVAARNVGEHGLDERVTLHRGDLFAPLGDNRYDLIITNPPYVDAEGMAALPPECRAEPKLAFDGGVDGLDVVRRILRDAPEHLTPDGGLICEIGRGRELVDEAFPELPLLWLDTEDSEGEVFWIAAADLD.

The protein belongs to the protein N5-glutamine methyltransferase family. PrmB subfamily.

It carries out the reaction L-glutaminyl-[ribosomal protein uL3] + S-adenosyl-L-methionine = N(5)-methyl-L-glutaminyl-[ribosomal protein uL3] + S-adenosyl-L-homocysteine + H(+). Functionally, methylates large ribosomal subunit protein uL3 on a specific glutamine residue. The chain is Ribosomal protein uL3 glutamine methyltransferase from Bradyrhizobium diazoefficiens (strain JCM 10833 / BCRC 13528 / IAM 13628 / NBRC 14792 / USDA 110).